The chain runs to 138 residues: Large ribosomal subunit protein uL16 (138 aa).

The segment covering 1 to 17 (MLIPRKVKHRKQHHPRQ) has biased composition (basic residues). A disordered region spans residues 1 to 24 (MLIPRKVKHRKQHHPRQRGIASGG).

It belongs to the universal ribosomal protein uL16 family. In terms of assembly, part of the 50S ribosomal subunit.

Functionally, binds 23S rRNA and is also seen to make contacts with the A and possibly P site tRNAs. This is Large ribosomal subunit protein uL16 from Mycobacterium ulcerans (strain Agy99).